Reading from the N-terminus, the 347-residue chain is Eukaryotic translation initiation factor 3 subunit H (347 aa).

The region spanning 6–149 (VCIDSSVALK…PSSTGPQGHT (144 aa)) is the MPN domain. Residues 136 to 155 (SDTDPSSTGPQGHTTTTPSG) form a disordered region. Residues 138–155 (TDPSSTGPQGHTTTTPSG) are compositionally biased toward polar residues.

Belongs to the eIF-3 subunit H family. As to quaternary structure, component of the eukaryotic translation initiation factor 3 (eIF-3) complex.

It is found in the cytoplasm. Functionally, component of the eukaryotic translation initiation factor 3 (eIF-3) complex, which is involved in protein synthesis of a specialized repertoire of mRNAs and, together with other initiation factors, stimulates binding of mRNA and methionyl-tRNAi to the 40S ribosome. The eIF-3 complex specifically targets and initiates translation of a subset of mRNAs involved in cell proliferation. This Yarrowia lipolytica (strain CLIB 122 / E 150) (Yeast) protein is Eukaryotic translation initiation factor 3 subunit H.